The primary structure comprises 157 residues: MAEKNERAIKVVAENRKARFNYAIEDTVEAGISLTGTEVKSVRGGKATIAESYADSRGGEIWLINATIPEYLQANRFNHEPKRPRKLLLHRKQINKLMGAIERQGMTLVPLKLYFNEKGRAKLLLALAKGKQLHDKRETEKKRDWSREKGRLLRARG.

A compositionally biased stretch (basic and acidic residues) spans 136 to 151 (KRETEKKRDWSREKGR). The segment at 136–157 (KRETEKKRDWSREKGRLLRARG) is disordered.

Belongs to the SmpB family.

It localises to the cytoplasm. In terms of biological role, required for rescue of stalled ribosomes mediated by trans-translation. Binds to transfer-messenger RNA (tmRNA), required for stable association of tmRNA with ribosomes. tmRNA and SmpB together mimic tRNA shape, replacing the anticodon stem-loop with SmpB. tmRNA is encoded by the ssrA gene; the 2 termini fold to resemble tRNA(Ala) and it encodes a 'tag peptide', a short internal open reading frame. During trans-translation Ala-aminoacylated tmRNA acts like a tRNA, entering the A-site of stalled ribosomes, displacing the stalled mRNA. The ribosome then switches to translate the ORF on the tmRNA; the nascent peptide is terminated with the 'tag peptide' encoded by the tmRNA and targeted for degradation. The ribosome is freed to recommence translation, which seems to be the essential function of trans-translation. This Rhodopseudomonas palustris (strain HaA2) protein is SsrA-binding protein.